Here is a 349-residue protein sequence, read N- to C-terminus: Phosphate acetyltransferase (349 aa).

It belongs to the phosphate acetyltransferase and butyryltransferase family.

It localises to the cytoplasm. The enzyme catalyses acetyl-CoA + phosphate = acetyl phosphate + CoA. Its pathway is metabolic intermediate biosynthesis; acetyl-CoA biosynthesis; acetyl-CoA from acetate: step 2/2. The chain is Phosphate acetyltransferase (pta) from Rickettsia typhi (strain ATCC VR-144 / Wilmington).